Here is a 269-residue protein sequence, read N- to C-terminus: Formamidopyrimidine-DNA glycosylase (269 aa).

The active-site Schiff-base intermediate with DNA is Pro-2. Glu-3 acts as the Proton donor in catalysis. Lys-57 functions as the Proton donor; for beta-elimination activity in the catalytic mechanism. The DNA site is built by His-90, Arg-109, and Lys-150. The segment at 235–269 (QVYGRKGEPCRVCGTPIVATKHAQRATFYCRHCQK) adopts an FPG-type zinc-finger fold. Arg-259 functions as the Proton donor; for delta-elimination activity in the catalytic mechanism.

Belongs to the FPG family. As to quaternary structure, monomer. The cofactor is Zn(2+).

It catalyses the reaction Hydrolysis of DNA containing ring-opened 7-methylguanine residues, releasing 2,6-diamino-4-hydroxy-5-(N-methyl)formamidopyrimidine.. It carries out the reaction 2'-deoxyribonucleotide-(2'-deoxyribose 5'-phosphate)-2'-deoxyribonucleotide-DNA = a 3'-end 2'-deoxyribonucleotide-(2,3-dehydro-2,3-deoxyribose 5'-phosphate)-DNA + a 5'-end 5'-phospho-2'-deoxyribonucleoside-DNA + H(+). Functionally, involved in base excision repair of DNA damaged by oxidation or by mutagenic agents. Acts as a DNA glycosylase that recognizes and removes damaged bases. Has a preference for oxidized purines, such as 7,8-dihydro-8-oxoguanine (8-oxoG). Has AP (apurinic/apyrimidinic) lyase activity and introduces nicks in the DNA strand. Cleaves the DNA backbone by beta-delta elimination to generate a single-strand break at the site of the removed base with both 3'- and 5'-phosphates. The chain is Formamidopyrimidine-DNA glycosylase from Salmonella newport (strain SL254).